The chain runs to 460 residues: Nuclear distribution protein PAC1-1 (460 aa).

The LisH domain maps to 9-41; it reads QADELHRALIAYLTAANLPNTAAALREELNLGE. Residues 74-96 adopt a coiled-coil conformation; sequence LVTQIMDLESRNHILQSELDNAT. Residues 90 to 100 show a composition bias toward polar residues; the sequence is SELDNATPTSR. The segment at 90 to 115 is disordered; it reads SELDNATPTSRQNKDPVAWLPRAPPR. 8 WD repeats span residues 120–161, 163–203, 207–247, 250–289, 294–354, 355–394, 399–439, and 441–460; these read SHRD…RTIK, HTKA…KNIR, GHDH…CVKT, GHAE…PEPR, GHEH…KTLA, GHDN…KCVK, AHGH…VTPD, and QIRC…IFAN.

This sequence belongs to the WD repeat LIS1/nudF family. Self-associates. Interacts with NDL1 and dynein.

It localises to the cytoplasm. The protein localises to the cytoskeleton. The protein resides in the spindle pole. Functionally, positively regulates the activity of the minus-end directed microtubule motor protein dynein. May enhance dynein-mediated microtubule sliding by targeting dynein to the microtubule plus end. Required for nuclear migration during vegetative growth as well as development. Required for retrograde early endosome (EE) transport from the hyphal tip. Required for localization of dynein to the mitotic spindle poles. Recruits additional proteins to the dynein complex at SPBs. This chain is Nuclear distribution protein PAC1-1, found in Sordaria macrospora (strain ATCC MYA-333 / DSM 997 / K(L3346) / K-hell).